Reading from the N-terminus, the 297-residue chain is 4-hydroxy-tetrahydrodipicolinate synthase (297 aa).

Residue threonine 47 participates in pyruvate binding. Tyrosine 136 serves as the catalytic Proton donor/acceptor. The Schiff-base intermediate with substrate role is filled by lysine 165. Isoleucine 206 contributes to the pyruvate binding site.

Belongs to the DapA family. Homotetramer; dimer of dimers.

It localises to the cytoplasm. It catalyses the reaction L-aspartate 4-semialdehyde + pyruvate = (2S,4S)-4-hydroxy-2,3,4,5-tetrahydrodipicolinate + H2O + H(+). Its pathway is amino-acid biosynthesis; L-lysine biosynthesis via DAP pathway; (S)-tetrahydrodipicolinate from L-aspartate: step 3/4. Its function is as follows. Catalyzes the condensation of (S)-aspartate-beta-semialdehyde [(S)-ASA] and pyruvate to 4-hydroxy-tetrahydrodipicolinate (HTPA). The protein is 4-hydroxy-tetrahydrodipicolinate synthase of Campylobacter curvus (strain 525.92).